Reading from the N-terminus, the 122-residue chain is MIYLYTADNVIPKDGLQGAFVDKDGTYDKVYILFTVTIGSKRIVKIPYIAQMCLNDECGPSSLSSHRWSTLLKVELECDIDGRSYSQINHSKTIKQIMIRYYMYSLIVLFQVRIMYLFYEYH.

Residues 1-122 (MIYLYTADNV…RIMYLFYEYH (122 aa)) enclose the Sema domain.

This sequence belongs to the semaphorin family.

The sequence is that of Semaphorin-like protein A43 (A43R) from Homo sapiens (Human).